We begin with the raw amino-acid sequence, 317 residues long: Neuroguidin-A (317 aa).

Disordered regions lie at residues 125–170 (ENDP…SKVK) and 280–317 (SALT…RRRH). The segment covering 146–157 (DERESDSGEEGA) has biased composition (acidic residues). Over residues 297–317 (KKSKKGPKKSKKKKGFSRRRH) the composition is skewed to basic residues.

This sequence belongs to the SAS10 family. Part of the small subunit (SSU) processome, composed of more than 70 proteins and the RNA chaperone small nucleolar RNA (snoRNA) U3.

The protein resides in the nucleus. The protein localises to the nucleolus. It is found in the chromosome. It localises to the centromere. Its subcellular location is the cytoplasm. The protein resides in the cell projection. The protein localises to the axon. It is found in the dendrite. It localises to the filopodium. Part of the small subunit (SSU) processome, first precursor of the small eukaryotic ribosomal subunit. During the assembly of the SSU processome in the nucleolus, many ribosome biogenesis factors, an RNA chaperone and ribosomal proteins associate with the nascent pre-rRNA and work in concert to generate RNA folding, modifications, rearrangements and cleavage as well as targeted degradation of pre-ribosomal RNA by the RNA exosome. Its dissociation from the complex determines the transition from state pre-A1 to state pre-A1*. May inhibit mRNA translation. This is Neuroguidin-A (ngdn-a) from Xenopus laevis (African clawed frog).